The chain runs to 224 residues: Peroxiredoxin-6 (224 aa).

Positions 4-168 (LLLGDEAPNF…ILRVVDSLQL (165 aa)) constitute a Thioredoxin domain. Residues 30 to 39 (DSWGILFSHP) form a required and sufficient for targeting to lysosomes and lamellar bodies region. Cys46 functions as the Cysteine sulfenic acid (-SOH) intermediate; for peroxidase activity in the catalytic mechanism. Residue Tyr88 is modified to Phosphotyrosine. Asp139 acts as the For phospholipase activity in catalysis. Position 176 is a phosphothreonine; by MAPK (Thr176).

This sequence belongs to the peroxiredoxin family. Prx6 subfamily. As to quaternary structure, homodimer. Interacts with GSTP1; mediates PRDX6 glutathionylation and regeneration. Post-translationally, irreversibly inactivated by overoxidation of Cys-46 to sulfinic acid (Cys-SO(2)H) and sulfonic acid (Cys-SO(3)H) forms upon oxidative stress. In terms of processing, phosphorylation at Thr-176 by MAP kinases increases the phospholipase activity of the enzyme. The phosphorylated form exhibits a greater lysophosphatidylcholine acyltransferase activity compared to the non-phosphorylated form.

It is found in the cytoplasm. It localises to the lysosome. It carries out the reaction a hydroperoxide + 2 glutathione = an alcohol + glutathione disulfide + H2O. The catalysed reaction is a 1,2-diacyl-sn-glycero-3-phosphocholine + H2O = a 1-acyl-sn-glycero-3-phosphocholine + a fatty acid + H(+). It catalyses the reaction a 1-acyl-sn-glycero-3-phosphocholine + an acyl-CoA = a 1,2-diacyl-sn-glycero-3-phosphocholine + CoA. The enzyme catalyses 1-hexadecanoyl-sn-glycero-3-phosphocholine + hexadecanoyl-CoA = 1,2-dihexadecanoyl-sn-glycero-3-phosphocholine + CoA. It carries out the reaction 1,2-dihexadecanoyl-sn-glycero-3-phosphocholine + H2O = 1-hexadecanoyl-sn-glycero-3-phosphocholine + hexadecanoate + H(+). Its function is as follows. Thiol-specific peroxidase that catalyzes the reduction of hydrogen peroxide and organic hydroperoxides to water and alcohols, respectively. Can reduce H(2)O(2) and short chain organic, fatty acid, and phospholipid hydroperoxides. Also has phospholipase activity, and can therefore either reduce the oxidized sn-2 fatty acyl group of phospholipids (peroxidase activity) or hydrolyze the sn-2 ester bond of phospholipids (phospholipase activity). These activities are dependent on binding to phospholipids at acidic pH and to oxidized phospholipds at cytosolic pH. Plays a role in cell protection against oxidative stress by detoxifying peroxides and in phospholipid homeostasis. Exhibits acyl-CoA-dependent lysophospholipid acyltransferase which mediates the conversion of lysophosphatidylcholine (1-acyl-sn-glycero-3-phosphocholine or LPC) into phosphatidylcholine (1,2-diacyl-sn-glycero-3-phosphocholine or PC). Shows a clear preference for LPC as the lysophospholipid and for palmitoyl CoA as the fatty acyl substrate. The sequence is that of Peroxiredoxin-6 (PRDX6) from Gallus gallus (Chicken).